The primary structure comprises 152 residues: Small ribosomal subunit protein uS13A (152 aa).

The protein belongs to the universal ribosomal protein uS13 family. Component of the small ribosomal subunit (SSU). Mature yeast ribosomes consist of a small (40S) and a large (60S) subunit. The 40S small subunit contains 1 molecule of ribosomal RNA (18S rRNA) and at least 33 different proteins. The large 60S subunit contains 3 rRNA molecules (25S, 5.8S and 5S rRNA) and at least 46 different proteins.

The protein resides in the cytoplasm. In terms of biological role, component of the ribosome, a large ribonucleoprotein complex responsible for the synthesis of proteins in the cell. The small ribosomal subunit (SSU) binds messenger RNAs (mRNAs) and translates the encoded message by selecting cognate aminoacyl-transfer RNA (tRNA) molecules. The large subunit (LSU) contains the ribosomal catalytic site termed the peptidyl transferase center (PTC), which catalyzes the formation of peptide bonds, thereby polymerizing the amino acids delivered by tRNAs into a polypeptide chain. The nascent polypeptides leave the ribosome through a tunnel in the LSU and interact with protein factors that function in enzymatic processing, targeting, and the membrane insertion of nascent chains at the exit of the ribosomal tunnel. The protein is Small ribosomal subunit protein uS13A (rps1801) of Schizosaccharomyces pombe (strain 972 / ATCC 24843) (Fission yeast).